A 355-amino-acid polypeptide reads, in one-letter code: UDP-N-acetylglucosamine--N-acetylmuramyl-(pentapeptide) pyrophosphoryl-undecaprenol N-acetylglucosamine transferase (355 aa).

UDP-N-acetyl-alpha-D-glucosamine-binding positions include 14–16 (TGG), N126, R164, S190, I243, 262–267 (ALTVAE), and Q288.

Belongs to the glycosyltransferase 28 family. MurG subfamily.

Its subcellular location is the cell inner membrane. It catalyses the reaction di-trans,octa-cis-undecaprenyl diphospho-N-acetyl-alpha-D-muramoyl-L-alanyl-D-glutamyl-meso-2,6-diaminopimeloyl-D-alanyl-D-alanine + UDP-N-acetyl-alpha-D-glucosamine = di-trans,octa-cis-undecaprenyl diphospho-[N-acetyl-alpha-D-glucosaminyl-(1-&gt;4)]-N-acetyl-alpha-D-muramoyl-L-alanyl-D-glutamyl-meso-2,6-diaminopimeloyl-D-alanyl-D-alanine + UDP + H(+). The protein operates within cell wall biogenesis; peptidoglycan biosynthesis. In terms of biological role, cell wall formation. Catalyzes the transfer of a GlcNAc subunit on undecaprenyl-pyrophosphoryl-MurNAc-pentapeptide (lipid intermediate I) to form undecaprenyl-pyrophosphoryl-MurNAc-(pentapeptide)GlcNAc (lipid intermediate II). This is UDP-N-acetylglucosamine--N-acetylmuramyl-(pentapeptide) pyrophosphoryl-undecaprenol N-acetylglucosamine transferase from Psychromonas ingrahamii (strain DSM 17664 / CCUG 51855 / 37).